Consider the following 96-residue polypeptide: Aspartyl/glutamyl-tRNA(Asn/Gln) amidotransferase subunit C (96 aa).

It belongs to the GatC family. In terms of assembly, heterotrimer of A, B and C subunits.

The catalysed reaction is L-glutamyl-tRNA(Gln) + L-glutamine + ATP + H2O = L-glutaminyl-tRNA(Gln) + L-glutamate + ADP + phosphate + H(+). The enzyme catalyses L-aspartyl-tRNA(Asn) + L-glutamine + ATP + H2O = L-asparaginyl-tRNA(Asn) + L-glutamate + ADP + phosphate + 2 H(+). In terms of biological role, allows the formation of correctly charged Asn-tRNA(Asn) or Gln-tRNA(Gln) through the transamidation of misacylated Asp-tRNA(Asn) or Glu-tRNA(Gln) in organisms which lack either or both of asparaginyl-tRNA or glutaminyl-tRNA synthetases. The reaction takes place in the presence of glutamine and ATP through an activated phospho-Asp-tRNA(Asn) or phospho-Glu-tRNA(Gln). This Trichormus variabilis (strain ATCC 29413 / PCC 7937) (Anabaena variabilis) protein is Aspartyl/glutamyl-tRNA(Asn/Gln) amidotransferase subunit C.